The primary structure comprises 328 residues: Phosphate acyltransferase (328 aa).

It belongs to the PlsX family. In terms of assembly, homodimer. Probably interacts with PlsY.

The protein localises to the cytoplasm. The enzyme catalyses a fatty acyl-[ACP] + phosphate = an acyl phosphate + holo-[ACP]. Its pathway is lipid metabolism; phospholipid metabolism. Catalyzes the reversible formation of acyl-phosphate (acyl-PO(4)) from acyl-[acyl-carrier-protein] (acyl-ACP). This enzyme utilizes acyl-ACP as fatty acyl donor, but not acyl-CoA. In Geobacillus thermodenitrificans (strain NG80-2), this protein is Phosphate acyltransferase.